Consider the following 627-residue polypeptide: uncharacterized protein (627 aa).

Over residues 1–20 the composition is skewed to basic and acidic residues; sequence MAKFKKDLTTKNKDTDRLSE. 2 disordered regions span residues 1–22 and 578–606; these read MAKF…SEEI and LSLG…LLPV. A compositionally biased stretch (acidic residues) spans 582 to 592; sequence SEEEQGQEETE.

This is an uncharacterized protein from Rickettsia prowazekii (strain Madrid E).